Here is a 207-residue protein sequence, read N- to C-terminus: dITP/XTP pyrophosphatase (207 aa).

16 to 21 (SNNKGK) is a binding site for substrate. D79 functions as the Proton acceptor in the catalytic mechanism. D79 contacts Mg(2+). Residues S80, 166-169 (FGYD), K189, and 194-195 (HR) each bind substrate.

It belongs to the HAM1 NTPase family. In terms of assembly, homodimer. It depends on Mg(2+) as a cofactor.

It catalyses the reaction XTP + H2O = XMP + diphosphate + H(+). It carries out the reaction dITP + H2O = dIMP + diphosphate + H(+). The enzyme catalyses ITP + H2O = IMP + diphosphate + H(+). Functionally, pyrophosphatase that catalyzes the hydrolysis of nucleoside triphosphates to their monophosphate derivatives, with a high preference for the non-canonical purine nucleotides XTP (xanthosine triphosphate), dITP (deoxyinosine triphosphate) and ITP. Seems to function as a house-cleaning enzyme that removes non-canonical purine nucleotides from the nucleotide pool, thus preventing their incorporation into DNA/RNA and avoiding chromosomal lesions. The protein is dITP/XTP pyrophosphatase of Acinetobacter baumannii (strain ATCC 17978 / DSM 105126 / CIP 53.77 / LMG 1025 / NCDC KC755 / 5377).